The following is a 166-amino-acid chain: Photosystem I assembly protein Ycf3 (166 aa).

TPR repeat units follow at residues 31 to 64, 68 to 101, and 116 to 149; these read AFKY…EEDP, SYIL…NPNL, and GEQA…APNN.

Belongs to the Ycf3 family.

The protein resides in the cellular thylakoid membrane. Functionally, essential for the assembly of the photosystem I (PSI) complex. May act as a chaperone-like factor to guide the assembly of the PSI subunits. The polypeptide is Photosystem I assembly protein Ycf3 (Acaryochloris marina (strain MBIC 11017)).